Consider the following 240-residue polypeptide: MEDLVCVSNHNICIHISVNILFIDIYITILMSKQESDNVFWIYDPMILFRDGNYLKIFPTKDMTQIQVLNALTRLCIYLAIIFVLVSAISGYAYVPIIFILIIIVIYFFNNNKNSVQTEMFDDNYPNTNNSDNIDNTDNIMNKQNYKKISDYNPYMNLTLNDIGSGNDDLEANLVELPKDSNRKFYTTSSTTNPNKQEDFMKWIYDLPETCKENQACCLRHEDVRFKRHNPDIDSPTPNS.

3 helical membrane passes run 12-32 (ICIHISVNILFIDIYITILMS), 66-86 (IQVLNALTRLCIYLAIIFVLV), and 89-109 (ISGYAYVPIIFILIIIVIYFF). Residues asparagine 129 and asparagine 157 are each glycosylated (N-linked (GlcNAc...) asparagine; by host).

The protein localises to the membrane. This is an uncharacterized protein from Acanthamoeba polyphaga mimivirus (APMV).